The sequence spans 122 residues: NADH-quinone oxidoreductase subunit A (122 aa).

3 helical membrane-spanning segments follow: residues 12-32 (IIIF…VNLI), 66-86 (LVAI…PWAI), and 91-111 (IGGL…VGFI).

This sequence belongs to the complex I subunit 3 family. As to quaternary structure, NDH-1 is composed of 14 different subunits. Subunits NuoA, H, J, K, L, M, N constitute the membrane sector of the complex.

It localises to the cell inner membrane. The catalysed reaction is a quinone + NADH + 5 H(+)(in) = a quinol + NAD(+) + 4 H(+)(out). In terms of biological role, NDH-1 shuttles electrons from NADH, via FMN and iron-sulfur (Fe-S) centers, to quinones in the respiratory chain. The immediate electron acceptor for the enzyme in this species is believed to be ubiquinone. Couples the redox reaction to proton translocation (for every two electrons transferred, four hydrogen ions are translocated across the cytoplasmic membrane), and thus conserves the redox energy in a proton gradient. The sequence is that of NADH-quinone oxidoreductase subunit A from Pelagibacter ubique (strain HTCC1062).